The sequence spans 322 residues: Endochitinase CH25 (322 aa).

The N-terminal stretch at 1-20 (MKSCLLLFLIFSFLLSFSLA) is a signal peptide. The 42-residue stretch at 21–62 (EQCGRQAGGALCPNGLCCSEFGWCGDTEAYCKQPGCQSQCGG) folds into the Chitin-binding type-1 domain. Disulfide bonds link C23–C38, C32–C44, C37–C51, C56–C60, C92–C154, C166–C174, and C273–C305. E136 (proton donor) is an active-site residue.

Belongs to the glycosyl hydrolase 19 family. Chitinase class I subfamily. As to expression, high expression in roots, moderate in floral tissues and low in stems and leaves.

The enzyme catalyses Random endo-hydrolysis of N-acetyl-beta-D-glucosaminide (1-&gt;4)-beta-linkages in chitin and chitodextrins.. This Brassica napus (Rape) protein is Endochitinase CH25.